Consider the following 60-residue polypeptide: Cytotoxin SP15c (60 aa).

4 cysteine pairs are disulfide-bonded: Cys3–Cys21, Cys14–Cys38, Cys42–Cys53, and Cys54–Cys59.

The protein belongs to the three-finger toxin family. Short-chain subfamily. Type IA cytotoxin sub-subfamily. In terms of assembly, monomer in solution; Homodimer and oligomer in the presence of negatively charged lipids forming a pore with a size ranging between 20 and 30 Angstroms. In terms of tissue distribution, expressed by the venom gland.

The protein localises to the secreted. Its subcellular location is the target cell membrane. In terms of biological role, shows cytolytic activity on many different cells by forming pore in lipid membranes. In vivo, increases heart rate or kills the animal by cardiac arrest. In addition, it binds to heparin with high affinity, interacts with Kv channel-interacting protein 1 (KCNIP1) in a calcium-independent manner, and binds to integrin alpha-V/beta-3 (ITGAV/ITGB3) with moderate affinity. The protein is Cytotoxin SP15c of Naja atra (Chinese cobra).